The chain runs to 168 residues: Protein OPG162 (168 aa).

At 1-14 (MKSLNRQTVSRFKK) the chain is on the intravirion side. A helical membrane pass occupies residues 15 to 37 (LSVPAAIMMILSTIISGIGTFLH). The Virion surface portion of the chain corresponds to 38–168 (YKEELMPSAC…SVLCVKKFYK (131 aa)). The C-type lectin domain occupies 54 to 163 (YDKHCYLDTN…CKSTQSVLCV (110 aa)). Disulfide bonds link Cys75/Cys162 and Cys141/Cys154. A glycan (N-linked (GlcNAc...) asparagine; by host) is linked at Asn133.

It belongs to the orthopoxvirus OPG162 protein family. As to quaternary structure, interacts with protein OPG161. Interacts with protein OPG164. Interacts with protein OPG190.

The protein resides in the virion membrane. Its subcellular location is the host Golgi apparatus. Functionally, forms a complex with OPG162 and OPG190 to coordinate the incorporation of OPG164 into wrapped enveloped virion (EV) membranes and, subsequently, the production of actin tails. Therefore plays an essential role in efficient cell-to-cell spread of viral particles. The chain is Protein OPG162 (OPG162) from Vaccinia virus (strain Western Reserve) (VACV).